A 557-amino-acid chain; its full sequence is 2-isopropylmalate synthase (557 aa).

Residues 33–307 form the Pyruvate carboxyltransferase domain; the sequence is PLWLSTDLRD…DPGLDFSDID (275 aa). The Mg(2+) site is built by D42, H246, H248, and N282. The segment at 439–557 is regulatory domain; sequence AETPYALKGH…LGQQASIRAA (119 aa).

This sequence belongs to the alpha-IPM synthase/homocitrate synthase family. LeuA type 2 subfamily. In terms of assembly, homodimer. The cofactor is Mg(2+).

Its subcellular location is the cytoplasm. It catalyses the reaction 3-methyl-2-oxobutanoate + acetyl-CoA + H2O = (2S)-2-isopropylmalate + CoA + H(+). It participates in amino-acid biosynthesis; L-leucine biosynthesis; L-leucine from 3-methyl-2-oxobutanoate: step 1/4. Its function is as follows. Catalyzes the condensation of the acetyl group of acetyl-CoA with 3-methyl-2-oxobutanoate (2-ketoisovalerate) to form 3-carboxy-3-hydroxy-4-methylpentanoate (2-isopropylmalate). The protein is 2-isopropylmalate synthase of Azotobacter vinelandii (strain DJ / ATCC BAA-1303).